Here is a 689-residue protein sequence, read N- to C-terminus: Glycine--tRNA ligase beta subunit (689 aa).

The protein belongs to the class-II aminoacyl-tRNA synthetase family. As to quaternary structure, tetramer of two alpha and two beta subunits.

It localises to the cytoplasm. It catalyses the reaction tRNA(Gly) + glycine + ATP = glycyl-tRNA(Gly) + AMP + diphosphate. In Yersinia enterocolitica serotype O:8 / biotype 1B (strain NCTC 13174 / 8081), this protein is Glycine--tRNA ligase beta subunit.